The primary structure comprises 382 residues: uncharacterized protein (382 aa).

The helical transmembrane segment at 1 to 21 (MKIILVVFVLIFVGVIGFNMI) threads the bilayer.

The protein belongs to the membrane fusion protein (MFP) (TC 8.A.1) family.

Its subcellular location is the membrane. This is an uncharacterized protein from Haemophilus influenzae (strain ATCC 51907 / DSM 11121 / KW20 / Rd).